We begin with the raw amino-acid sequence, 126 residues long: Holo-[acyl-carrier-protein] synthase (126 aa).

Mg(2+)-binding residues include aspartate 9 and glutamate 58.

It belongs to the P-Pant transferase superfamily. AcpS family. The cofactor is Mg(2+).

It localises to the cytoplasm. The enzyme catalyses apo-[ACP] + CoA = holo-[ACP] + adenosine 3',5'-bisphosphate + H(+). Transfers the 4'-phosphopantetheine moiety from coenzyme A to a Ser of acyl-carrier-protein. In Escherichia fergusonii (strain ATCC 35469 / DSM 13698 / CCUG 18766 / IAM 14443 / JCM 21226 / LMG 7866 / NBRC 102419 / NCTC 12128 / CDC 0568-73), this protein is Holo-[acyl-carrier-protein] synthase.